The chain runs to 890 residues: Translation initiation factor IF-2 (890 aa).

The tract at residues 45–304 (LIDHLNQKNS…LQQGFQKPAQ (260 aa)) is disordered. Residues 67-81 (STLNIPGTGGKSKSV) show a composition bias toward polar residues. A compositionally biased stretch (basic and acidic residues) spans 92 to 217 (VKRDPQEAER…RMAEENKWTD (126 aa)). Residues 252–266 (GRGRNAKAARPKKGN) show a composition bias toward basic residues. The span at 267 to 280 (KHAESKADREEARA) shows a compositional bias: basic and acidic residues. The tr-type G domain maps to 389 to 558 (PRAPVVTIMG…LLQAEVLELK (170 aa)). Positions 398–405 (GHVDHGKT) are G1. Residue 398-405 (GHVDHGKT) coordinates GTP. Residues 423-427 (GITQH) are G2. Positions 444 to 447 (DTPG) are G3. GTP is bound by residues 444–448 (DTPGH) and 498–501 (NKID). The interval 498–501 (NKID) is G4. Residues 534–536 (SAK) are G5. Lys-808 is subject to N6-acetyllysine.

It belongs to the TRAFAC class translation factor GTPase superfamily. Classic translation factor GTPase family. IF-2 subfamily.

The protein localises to the cytoplasm. Its function is as follows. One of the essential components for the initiation of protein synthesis. Protects formylmethionyl-tRNA from spontaneous hydrolysis and promotes its binding to the 30S ribosomal subunits. Also involved in the hydrolysis of GTP during the formation of the 70S ribosomal complex. In Escherichia coli O127:H6 (strain E2348/69 / EPEC), this protein is Translation initiation factor IF-2.